The following is a 302-amino-acid chain: D-alanine--D-alanine ligase (302 aa).

The ATP-grasp domain maps to lysine 100–glutamine 294. Glycine 127 to threonine 180 is a binding site for ATP. Positions 248, 261, and 263 each coordinate Mg(2+).

The protein belongs to the D-alanine--D-alanine ligase family. The cofactor is Mg(2+). Mn(2+) serves as cofactor.

The protein resides in the cytoplasm. It catalyses the reaction 2 D-alanine + ATP = D-alanyl-D-alanine + ADP + phosphate + H(+). The protein operates within cell wall biogenesis; peptidoglycan biosynthesis. Functionally, cell wall formation. The sequence is that of D-alanine--D-alanine ligase from Lawsonia intracellularis (strain PHE/MN1-00).